The sequence spans 361 residues: Zygote arrest protein 1 (361 aa).

Disordered regions lie at residues 1–23 (MFPA…AGDG), 98–128 (QPAG…PRSW), and 148–252 (VAGG…EQDK). Thr154 carries the phosphothreonine; by CDK1 modification. Ser161 is subject to Phosphoserine; by CDK1. A compositionally biased stretch (basic and acidic residues) spans 168–177 (REPEPREVAA). The 3CxxC-type zinc-finger motif lies at 263-346 (KYGYYHCKDC…RQDLCGRCKD (84 aa)).

This sequence belongs to the ZAR1 family. In terms of assembly, interacts with YBX2. In terms of processing, phosphorylation by CDK1 does not regulate formation of MARDO (mitochondria-associated ribonucleoprotein domain) membraneless compartment. Ubiquitinated and degradaded by the proteasome during oocyte meiotic maturation, leading to MARDO (mitochondria-associated ribonucleoprotein domain) membraneless compartment dissolution. Ovary. Expressed in primary oocytes (from primary through antral follicle stages) and during the progression from Meiosis I to Meiosis II. The mRNA is detected in growing oocytes (early primary follicle, type 3a) through fully grown oocytes (antral follicle, type 8).

It localises to the cytoplasm. Its subcellular location is the cytoplasmic ribonucleoprotein granule. Its function is as follows. mRNA-binding protein that mediates formation of MARDO (mitochondria-associated ribonucleoprotein domain), a membraneless compartment that stores maternal mRNAs in oocytes. MARDO assembly around mitochondria is directed by an increase in mitochondrial membrane potential during oocyte growth. Promotes formation of MARDO phase-separated membraneless compartment by undergoing liquid-liquid phase separation upon binding to maternal mRNAs. Binds to the 3'-UTR of maternal mRNAs. Maternal mRNAs stored in the MARDO are translationally repressed. Essential for female fertility and oocyte-to-embryo transition by coordinating maternal mRNA storage, translation and degradation. The polypeptide is Zygote arrest protein 1 (Mus musculus (Mouse)).